We begin with the raw amino-acid sequence, 63 residues long: Large ribosomal subunit protein uL29 (63 aa).

It belongs to the universal ribosomal protein uL29 family.

The sequence is that of Large ribosomal subunit protein uL29 from Baumannia cicadellinicola subsp. Homalodisca coagulata.